A 103-amino-acid chain; its full sequence is N(4)-acetylcytidine amidohydrolase (103 aa).

An ASCH domain is found at 6-92; it reads TFFERFEQDI…VIQEIYPGLE (87 aa). Lys20 serves as the catalytic Proton acceptor. Residue Thr23 is the Nucleophile of the active site. Residue Glu73 is the Proton donor of the active site.

This sequence belongs to the N(4)-acetylcytidine amidohydrolase family.

The enzyme catalyses N(4)-acetylcytidine + H2O = cytidine + acetate + H(+). It carries out the reaction N(4)-acetyl-2'-deoxycytidine + H2O = 2'-deoxycytidine + acetate + H(+). It catalyses the reaction N(4)-acetylcytosine + H2O = cytosine + acetate + H(+). Its function is as follows. Catalyzes the hydrolysis of N(4)-acetylcytidine (ac4C). This Shewanella sp. (strain MR-4) protein is N(4)-acetylcytidine amidohydrolase.